The following is a 51-amino-acid chain: Large ribosomal subunit protein eL39 (51 aa).

It belongs to the eukaryotic ribosomal protein eL39 family.

In Saccharolobus islandicus (strain Y.N.15.51 / Yellowstone #2) (Sulfolobus islandicus), this protein is Large ribosomal subunit protein eL39.